Here is a 519-residue protein sequence, read N- to C-terminus: B3 domain-containing protein Os03g0620400 (519 aa).

A DNA-binding region (TF-B3 1) is located at residues 26–119 (MKCFHLQMSA…RFEVLILDSD (94 aa)). A disordered region spans residues 138–218 (ERNAAPVDIS…DPQMPPGRNY (81 aa)). Residues 189 to 209 (SGEEGTDSSTSEDESSYELDD) show a composition bias toward acidic residues. 2 consecutive DNA-binding regions (TF-B3) follow at residues 249–349 (VAIM…LRET) and 416–516 (YVSI…IRRN).

The protein resides in the nucleus. The protein is B3 domain-containing protein Os03g0620400 of Oryza sativa subsp. japonica (Rice).